The primary structure comprises 274 residues: Bis(5'-nucleosyl)-tetraphosphatase, symmetrical (274 aa).

The protein belongs to the Ap4A hydrolase family.

The catalysed reaction is P(1),P(4)-bis(5'-adenosyl) tetraphosphate + H2O = 2 ADP + 2 H(+). Functionally, hydrolyzes diadenosine 5',5'''-P1,P4-tetraphosphate to yield ADP. The chain is Bis(5'-nucleosyl)-tetraphosphatase, symmetrical from Shewanella sp. (strain MR-4).